A 97-amino-acid chain; its full sequence is uncharacterized protein (97 aa).

This is an uncharacterized protein from Escherichia coli O6:K15:H31 (strain 536 / UPEC).